The following is a 239-amino-acid chain: ATP-dependent dethiobiotin synthetase BioD (239 aa).

15–20 (EIGKTF) contacts ATP. Position 19 (Thr-19) interacts with Mg(2+). The active site involves Lys-40. Residues Asp-57, 118 to 121 (EGVG), 178 to 179 (NH), and 211 to 213 (AHL) each bind ATP. Mg(2+) is bound by residues Asp-57 and Glu-118.

It belongs to the dethiobiotin synthetase family. As to quaternary structure, homodimer. Mg(2+) serves as cofactor.

It localises to the cytoplasm. It carries out the reaction (7R,8S)-7,8-diammoniononanoate + CO2 + ATP = (4R,5S)-dethiobiotin + ADP + phosphate + 3 H(+). The protein operates within cofactor biosynthesis; biotin biosynthesis; biotin from 7,8-diaminononanoate: step 1/2. Its function is as follows. Catalyzes a mechanistically unusual reaction, the ATP-dependent insertion of CO2 between the N7 and N8 nitrogen atoms of 7,8-diaminopelargonic acid (DAPA, also called 7,8-diammoniononanoate) to form a ureido ring. The protein is ATP-dependent dethiobiotin synthetase BioD of Burkholderia vietnamiensis (strain G4 / LMG 22486) (Burkholderia cepacia (strain R1808)).